The following is a 368-amino-acid chain: Peptide chain release factor 2 (368 aa).

Gln-250 is subject to N5-methylglutamine.

This sequence belongs to the prokaryotic/mitochondrial release factor family. Methylated by PrmC. Methylation increases the termination efficiency of RF2.

The protein localises to the cytoplasm. Functionally, peptide chain release factor 2 directs the termination of translation in response to the peptide chain termination codons UGA and UAA. In Rickettsia felis (strain ATCC VR-1525 / URRWXCal2) (Rickettsia azadi), this protein is Peptide chain release factor 2.